Consider the following 539-residue polypeptide: G protein-coupled receptor associated sorting protein 3 (539 aa).

Residues 1 to 10 (MTGSKNKARA) show a composition bias toward basic residues. Disordered regions lie at residues 1–112 (MTGS…NWFW) and 134–172 (VAKC…EENV). Basic and acidic residues-rich tracts occupy residues 66 to 80 (VVAE…ESKA) and 88 to 106 (FNHR…DKPS). A compositionally biased stretch (polar residues) spans 134 to 146 (VAKCENKPSTSIQ).

Belongs to the GPRASP family. As to quaternary structure, homodimer.

It is found in the cytoplasm. The protein resides in the nucleus. Survival and differentiation promoting protein that plays a role in the regulation of neurosynaptogenesis. Induces phosphatase PP2A activity which results in APP dephosphorylation and inhibits BACE1-mediated processing of APP. In Mus musculus (Mouse), this protein is G protein-coupled receptor associated sorting protein 3 (Gprasp3).